A 204-amino-acid chain; its full sequence is Large ribosomal subunit protein bL25 (204 aa).

The protein belongs to the bacterial ribosomal protein bL25 family. CTC subfamily. As to quaternary structure, part of the 50S ribosomal subunit; part of the 5S rRNA/L5/L18/L25 subcomplex. Contacts the 5S rRNA. Binds to the 5S rRNA independently of L5 and L18.

Its function is as follows. This is one of the proteins that binds to the 5S RNA in the ribosome where it forms part of the central protuberance. The sequence is that of Large ribosomal subunit protein bL25 from Pseudomonas paraeruginosa (strain DSM 24068 / PA7) (Pseudomonas aeruginosa (strain PA7)).